A 410-amino-acid polypeptide reads, in one-letter code: Sensor-like histidine kinase SenX3 (410 aa).

Helical transmembrane passes span Ala-6 to Met-26 and Ile-46 to Val-66. A Histidine kinase domain is found at Asn-164–Ile-380. Position 167 is a phosphohistidine; by autocatalysis (His-167). The segment at Asp-385 to Arg-410 is disordered.

In terms of processing, autophosphorylated.

Its subcellular location is the cell membrane. The enzyme catalyses ATP + protein L-histidine = ADP + protein N-phospho-L-histidine.. Its function is as follows. Member of the two-component regulatory system SenX3/RegX3. Autophosphorylates, and then transfers the phosphate group to RegX3. This Mycobacterium bovis (strain ATCC BAA-935 / AF2122/97) protein is Sensor-like histidine kinase SenX3.